We begin with the raw amino-acid sequence, 217 residues long: tRNA (guanine-N(7)-)-methyltransferase (217 aa).

4 residues coordinate S-adenosyl-L-methionine: Glu-43, Asp-68, Asn-101, and Asn-123. Lys-127 provides a ligand contact to substrate. Residues 129–134 (KHNKRR) form an interaction with RNA region. Substrate-binding positions include Asp-159 and 196-199 (TEYE).

Belongs to the class I-like SAM-binding methyltransferase superfamily. TrmB family.

The enzyme catalyses guanosine(46) in tRNA + S-adenosyl-L-methionine = N(7)-methylguanosine(46) in tRNA + S-adenosyl-L-homocysteine. Its pathway is tRNA modification; N(7)-methylguanine-tRNA biosynthesis. In terms of biological role, catalyzes the formation of N(7)-methylguanine at position 46 (m7G46) in tRNA. The polypeptide is tRNA (guanine-N(7)-)-methyltransferase (Clostridium botulinum (strain Okra / Type B1)).